A 521-amino-acid polypeptide reads, in one-letter code: GMC-type oxidoreductase acuG (521 aa).

Residues 14 to 15 (TV), 34 to 35 (EA), Leu-82, 90 to 93 (NYGL), Ala-492, and 503 to 504 (YQ) contribute to the FAD site.

This sequence belongs to the GMC oxidoreductase family. FAD is required as a cofactor.

It participates in secondary metabolite biosynthesis. In terms of biological role, GMC-type oxidoreductase; part of the gene cluster that mediates the biosynthesis of aculins. The pathway begins with the synthesis of 6-methylsalicylic acid by the polyketide synthase (PKS) acuA via condensation of acetate and malonate units. The 6-methylsalicylic acid decarboxylase acuB then catalyzes the decarboxylation of 6-methylsalicylic acid to yield m-cresol (also known as 3-methylphenol). These first reactions occur in the cytosol. The intermediate m-cresol is then transported into the endoplasmic reticulum where the cytochrome P450 monooxygenase acuC converts it to m-hydroxybenzyl alcohol, which is further converted to gentisyl alcohol by the cytochrome P450 monooxygenase acuD. Gentisyl alcohol is further oxidized by the oxidoreductase acuE that probably catalyzes hydroxylation of the aromatic ring. The aromatic system might then be opened by oxidation through a Baeyer-Villiger type of oxidation, which could be catalyzed by acuF, with the carboxylic acid at C-1 subsequently reduced to an aldehyde by acuG. Subsequently, a hemiacetal is formed, before the dehydrogenase acuH would reduce the double bond between C-4 and C-6. Finally, keto-enol tautomerism results in formation of aculinic acid, which exists as two diastereomers (both R/S configurations at C-1) by non-enzymatic hemiacetal formation. The carboxypeptidase acuI could be involved in the linking of aculinic acid to an aculene A moiety produced by the aculene biosynthesis cluster and which leads to the production of aculin A. AcuI may also be involved in the attachment of proline to aculinic acid to form epi-aculins A and B. The sequence is that of GMC-type oxidoreductase acuG from Aspergillus aculeatus (strain ATCC 16872 / CBS 172.66 / WB 5094).